A 94-amino-acid chain; its full sequence is Progonadoliberin-1 (94 aa).

An N-terminal signal peptide occupies residues 1–22 (MAAKILALWLLLAGTVFPQGCC). A Pyrrolidone carboxylic acid modification is found at glutamine 23. Glycine 32 is modified (glycine amide).

This sequence belongs to the GnRH family. In terms of tissue distribution, synthesized in preoptic neurons and is transported to the pituitary in the preoptic-hypophyseal axons.

The protein localises to the secreted. In terms of biological role, stimulates the secretion of gonadotropins. May be responsible for the regulation of the hypothalamic-pituitary-gonadal axis. The polypeptide is Progonadoliberin-1 (gnrh1) (Haplochromis burtoni (Burton's mouthbrooder)).